Here is a 1768-residue protein sequence, read N- to C-terminus: Maestro heat-like repeat-containing protein family member 1 homolog (1768 aa).

HEAT repeat units lie at residues 4–47 (TSQV…HQPN), 164–203 (VHNP…AICS), 816–856 (QRLQ…AVHP), 1166–1204 (QSQM…ARGA), 1483–1521 (EQLL…CSST), and 1731–1768 (TISR…HDFH).

The protein belongs to the MROH1 family. In terms of assembly, homooligomer; homooligomerizes at lysosome scission sites.

Its subcellular location is the lysosome membrane. Functionally, lysosome fission factor. Recruited to lysosomes by rab-7 at scission sites and homooligomerizes to mediate the constriction and scission of lysosomal tubules. May sever membranes by inserting amphipathic helices into one bilayer leaflet. Lysosome fission is required to maintain their steady-state number, shape, size, composition and function, and to accomplish regeneration. This chain is Maestro heat-like repeat-containing protein family member 1 homolog, found in Caenorhabditis elegans.